The primary structure comprises 381 residues: Chymosin (381 aa).

The signal sequence occupies residues 1 to 16 (MRCLVVLLAALALSQA). Residues 17 to 58 (SGITRIPLHKGKTLRKALKERGLLEDFLQRQQYAVSSKYSSL) constitute a propeptide, activation peptide. In terms of domain architecture, Peptidase A1 spans 74-378 (YFGKIYIGTP…DRANNRVGLA (305 aa)). The active site involves D92. The cysteines at positions 105 and 110 are disulfide-linked. N158 is a glycosylation site (N-linked (GlcNAc...) asparagine). C265 and C269 form a disulfide bridge. The active site involves D274. A disulfide bond links C308 and C341. Residue N349 is glycosylated (N-linked (GlcNAc...) asparagine).

This sequence belongs to the peptidase A1 family.

It catalyses the reaction Broad specificity similar to that of pepsin A. Clots milk by cleavage of a single 104-Ser-Phe-|-Met-Ala-107 bond in kappa-chain of casein.. Functionally, chymosin is synthesized in the mucosa of the abomasum (fourth stomach) of young (unweaned) ruminants. The enzyme hydrolyzes casein to paracasein. The polypeptide is Chymosin (Camelus dromedarius (Dromedary)).